The chain runs to 360 residues: Peptide chain release factor 1 (360 aa).

An N5-methylglutamine modification is found at glutamine 235. Residues 285-314 are disordered; it reads KRQQAEASTRRNLLGSGDRSDRNRTYNFPQ.

The protein belongs to the prokaryotic/mitochondrial release factor family. Methylated by PrmC. Methylation increases the termination efficiency of RF1.

The protein resides in the cytoplasm. Peptide chain release factor 1 directs the termination of translation in response to the peptide chain termination codons UAG and UAA. The polypeptide is Peptide chain release factor 1 (Klebsiella pneumoniae subsp. pneumoniae (strain ATCC 700721 / MGH 78578)).